We begin with the raw amino-acid sequence, 71 residues long: Small ribosomal subunit protein bS21 (71 aa).

The protein belongs to the bacterial ribosomal protein bS21 family.

This chain is Small ribosomal subunit protein bS21, found in Blochmanniella floridana.